Consider the following 61-residue polypeptide: UPF0434 protein PFLU_3771 (61 aa).

Belongs to the UPF0434 family.

This is UPF0434 protein PFLU_3771 from Pseudomonas fluorescens (strain SBW25).